Consider the following 704-residue polypeptide: Matrix metalloproteinase-9 (704 aa).

An N-terminal signal peptide occupies residues 1–19; it reads MSPRQPLVLVFLVLGCCSA. The propeptide at 20–106 is activation peptide; sequence APRPHKPTVV…PRCGVPDLGK (87 aa). Asparagine 38 carries N-linked (GlcNAc...) asparagine glycosylation. The Cysteine switch signature appears at 97–104; it reads PRCGVPDL. Residue cysteine 99 participates in Zn(2+) binding. Residue asparagine 127 is glycosylated (N-linked (GlcNAc...) asparagine). 2 residues coordinate Ca(2+): aspartate 131 and aspartate 165. Zn(2+) contacts are provided by histidine 175 and aspartate 177. 4 residues coordinate Ca(2+): aspartate 182, glycine 183, asparagine 185, and leucine 187. Histidine 190 serves as a coordination point for Zn(2+). 3 residues coordinate Ca(2+): glycine 197, glutamine 199, and aspartate 201. Histidine 203 contacts Zn(2+). Residues aspartate 205, aspartate 206, and glutamate 208 each coordinate Ca(2+). Fibronectin type-II domains are found at residues 225–273, 283–331, and 342–390; these read ADGA…FCPS, GDGK…FCPT, and SAGE…FCPD. 6 disulfides stabilise this stretch: cysteine 230/cysteine 256, cysteine 244/cysteine 271, cysteine 288/cysteine 314, cysteine 302/cysteine 329, cysteine 347/cysteine 373, and cysteine 361/cysteine 388. A Zn(2+)-binding site is contributed by histidine 401. Residue glutamate 402 is part of the active site. Histidine 405 and histidine 411 together coordinate Zn(2+). The interval 434-507 is disordered; sequence DDVRGIQHLY…PSEAPTVPVD (74 aa). 2 stretches are compositionally biased toward pro residues: residues 450-461 and 483-496; these read EPQPPTAPPTAP and TGPP…PPTA. A disulfide bridge links cysteine 513 with cysteine 701. 4 Hemopexin repeats span residues 515-560, 561-605, 607-654, and 655-701; these read VNIF…WPAL, PRKL…GLGP, VTQV…YPGV, and PLNT…ILQC.

It belongs to the peptidase M10A family. Exists as monomer or homodimer; disulfide-linked. Also exists as heterodimer with LCN2. Macrophages and transformed cell lines produce only the monomeric form. Interacts with ECM1. Zn(2+) serves as cofactor. Requires Ca(2+) as cofactor. N- and O-glycosylated.

It localises to the secreted. The protein localises to the extracellular space. The protein resides in the extracellular matrix. The catalysed reaction is Cleavage of gelatin types I and V and collagen types IV and V.. Functionally, matrix metalloproteinase that plays an essential role in local proteolysis of the extracellular matrix and in leukocyte migration. Could play a role in bone osteoclastic resorption. Cleaves KiSS1 at a Gly-|-Leu bond. Cleaves NINJ1 to generate the Secreted ninjurin-1 form. Cleaves type IV and type V collagen into large C-terminal three quarter fragments and shorter N-terminal one quarter fragments. Degrades fibronectin but not laminin or Pz-peptide. The chain is Matrix metalloproteinase-9 (MMP9) from Canis lupus familiaris (Dog).